A 358-amino-acid chain; its full sequence is UDP-N-acetylglucosamine--N-acetylmuramyl-(pentapeptide) pyrophosphoryl-undecaprenol N-acetylglucosamine transferase (358 aa).

Residues 13–15 (TGG), asparagine 125, arginine 161, serine 189, isoleucine 244, and glutamine 288 each bind UDP-N-acetyl-alpha-D-glucosamine.

It belongs to the glycosyltransferase 28 family. MurG subfamily.

It is found in the cell membrane. It catalyses the reaction di-trans,octa-cis-undecaprenyl diphospho-N-acetyl-alpha-D-muramoyl-L-alanyl-D-glutamyl-meso-2,6-diaminopimeloyl-D-alanyl-D-alanine + UDP-N-acetyl-alpha-D-glucosamine = di-trans,octa-cis-undecaprenyl diphospho-[N-acetyl-alpha-D-glucosaminyl-(1-&gt;4)]-N-acetyl-alpha-D-muramoyl-L-alanyl-D-glutamyl-meso-2,6-diaminopimeloyl-D-alanyl-D-alanine + UDP + H(+). Its pathway is cell wall biogenesis; peptidoglycan biosynthesis. Functionally, cell wall formation. Catalyzes the transfer of a GlcNAc subunit on undecaprenyl-pyrophosphoryl-MurNAc-pentapeptide (lipid intermediate I) to form undecaprenyl-pyrophosphoryl-MurNAc-(pentapeptide)GlcNAc (lipid intermediate II). The polypeptide is UDP-N-acetylglucosamine--N-acetylmuramyl-(pentapeptide) pyrophosphoryl-undecaprenol N-acetylglucosamine transferase (Baumannia cicadellinicola subsp. Homalodisca coagulata).